The chain runs to 104 residues: N(4)-acetylcytidine amidohydrolase (104 aa).

One can recognise an ASCH domain in the interval 6–102; the sequence is ITFYQRFEAD…SEFWVIEIRL (97 aa). Lys21 (proton acceptor) is an active-site residue. The active-site Nucleophile is the Thr24. The active-site Proton donor is the Glu74.

It belongs to the N(4)-acetylcytidine amidohydrolase family.

The catalysed reaction is N(4)-acetylcytidine + H2O = cytidine + acetate + H(+). The enzyme catalyses N(4)-acetyl-2'-deoxycytidine + H2O = 2'-deoxycytidine + acetate + H(+). It catalyses the reaction N(4)-acetylcytosine + H2O = cytosine + acetate + H(+). Catalyzes the hydrolysis of N(4)-acetylcytidine (ac4C). In Haemophilus influenzae (strain PittEE), this protein is N(4)-acetylcytidine amidohydrolase.